The following is a 1131-amino-acid chain: MFQIPVENLDNIRKVRKKVKGILVDIGLDSCKELLKDLKGFDPGEKYFHNTSWGDVSLWEPSGKKVRYRTKPYCCGLCKYSTKVLTSFKNHLHRYHEDEIDQELVIPCPNCVFASQPKVVGRHFRMFHAPVRKVQNYTVNILGETKSSRSDVISFTCLKCNFSNTLYYSMKKHVLVAHFHYLINSYFGLRTEEMGEQPKTNDTVSIEKIPPPDKYYCKKCNANASSQDALMYHILTSDIHRDLENKLRSVISEHIKRTGLLKQTHIAPKPAAHLAAPANGSAPSAPAQPPCFHLALPQNSPSPAAGQPVTVAQGAPGSLTHSPPAAGQSHMTLVSSPLPVGQNSLTLQPPAPQPVFLSHGVPLHQSVNPPVLPLSQPVGPVNKSVGTSVLPINQTVRPGVLPLTQPVGPINRPVGPGVLPVSPSVTPGVLQAVSPGVLSVSRAVPSGVLPAGQMTPAGQMTPAGVIPGQTATSGVLPTGQMVQSGVLPVGQTAPSRVLPPGQTAPLRVISAGQVVPSGLLSPNQTVSSSAVVPVNQGVNSGVLQLSQPVVSGVLPVGQPVRPGVLQLNQTVGTNILPVNQPVRPGASQNTTFLTSGSILRQLIPTGKQVNGIPTYTLAPVSVTLPVPPGGLATVAPPQMPIQLLPSGAAAPMAGSMPGMPSPPVLVNAAQSVFVQASSSAADTNQVLKQAKQWKTCPVCNELFPSNVYQVHMEVAHKHSESKSGEKLEPEKLAACAPFLKWMREKTVRCLSCKCLVSEEELIHHLLMHGLGCLFCPCTFHDIKGLSEHSRNRHLGKKKLPMDYSNRGFQLDVDANGNLLFPHLDFITILPKEKLGEREVYLAILAGIHSKSLVPVYVKVRPQAEGTPGSTGKRVSTCPFCFGPFVTTEAYELHLKERHHIMPTVHTVLKSPAFKCIHCCGVYTGNMTLAAIAVHLVRCRSAPKDSSSDLQAQPGFIHNSELLLVSGEVMHDSSFSVKRKLPDGHLGAEDQRHGEEQPPILNADAAPGPEKVTSVVPFKRQRNESRTEGPIVKDEALQILALDPKKYEGRSYEEKKQFLKDYFHKKPYPSKKEIELLSSLFWVWKIDVASFFGKRRYICMKAIKNHKPSVLLGFDMSELKNVKHRLNFEYEP.

The C2H2-type 1 zinc finger occupies 73 to 96 (YCCGLCKYSTKVLTSFKNHLHRYH). The C2H2-type 2; degenerate zinc finger occupies 106-128 (IPCPNCVFASQPKVVGRHFRMFH). Residues Lys-118 and Lys-146 each participate in a glycyl lysine isopeptide (Lys-Gly) (interchain with G-Cter in SUMO2) cross-link. The C2H2-type 3; degenerate zinc finger occupies 155–178 (FTCLKCNFSNTLYYSMKKHVLVAH). Residues 215–240 (YYCKKCNANASSQDALMYHILTSDIH) form a C2H2-type 4 zinc finger. Residues 274 to 285 (LAAPANGSAPSA) are compositionally biased toward low complexity. The disordered stretch occupies residues 274-329 (LAAPANGSAPSAPAQPPCFHLALPQNSPSPAAGQPVTVAQGAPGSLTHSPPAAGQS). Residues 694–716 (KTCPVCNELFPSNVYQVHMEVAH) form a C2H2-type 5; degenerate zinc finger. The C2H2-type 6; degenerate zinc-finger motif lies at 747 to 768 (VRCLSCKCLVSEEELIHHLLMH). 2 C2H2-type zinc fingers span residues 770 to 793 (LGCL…RNRH) and 875 to 898 (STCP…KERH). A C2H2-type 9; degenerate zinc finger spans residues 913 to 937 (FKCIHCCGVYTGNMTLAAIAVHLVR). Glycyl lysine isopeptide (Lys-Gly) (interchain with G-Cter in SUMO2) cross-links involve residues Lys-979 and Lys-1018. Position 1024 is a phosphoserine (Ser-1024). Lys-1032 participates in a covalent cross-link: Glycyl lysine isopeptide (Lys-Gly) (interchain with G-Cter in SUMO1); alternate. A Glycyl lysine isopeptide (Lys-Gly) (interchain with G-Cter in SUMO2); alternate cross-link involves residue Lys-1032. Positions 1043–1102 (PKKYEGRSYEEKKQFLKDYFHKKPYPSKKEIELLSSLFWVWKIDVASFFGKRRYICMKAI) form a DNA-binding region, homeobox.

Belongs to the krueppel C2H2-type zinc-finger protein family. In terms of assembly, may interact with SMARCA4/BRG1.

The protein localises to the nucleus. Functionally, may be involved in transcriptional regulation. May play a role in neuronal function; perhaps involved in protection of brain tissues from oxidative stress. May be involved in erythroid differentiation. This Homo sapiens (Human) protein is Activity-dependent neuroprotector homeobox protein 2 (ADNP2).